The chain runs to 279 residues: ATP synthase gamma chain (279 aa).

The protein belongs to the ATPase gamma chain family. In terms of assembly, F-type ATPases have 2 components, CF(1) - the catalytic core - and CF(0) - the membrane proton channel. CF(1) has five subunits: alpha(3), beta(3), gamma(1), delta(1), epsilon(1). CF(0) has three main subunits: a, b and c.

The protein localises to the cell membrane. Its function is as follows. Produces ATP from ADP in the presence of a proton gradient across the membrane. The gamma chain is believed to be important in regulating ATPase activity and the flow of protons through the CF(0) complex. The protein is ATP synthase gamma chain of Mycoplasma genitalium (strain ATCC 33530 / DSM 19775 / NCTC 10195 / G37) (Mycoplasmoides genitalium).